Consider the following 647-residue polypeptide: DNA mismatch repair protein MutL (647 aa).

The disordered stretch occupies residues 375 to 395 (KQEEPQAVKQPPQLWQPPKQE). Residues 383-395 (KQPPQLWQPPKQE) are compositionally biased toward low complexity.

Belongs to the DNA mismatch repair MutL/HexB family.

Functionally, this protein is involved in the repair of mismatches in DNA. It is required for dam-dependent methyl-directed DNA mismatch repair. May act as a 'molecular matchmaker', a protein that promotes the formation of a stable complex between two or more DNA-binding proteins in an ATP-dependent manner without itself being part of a final effector complex. The chain is DNA mismatch repair protein MutL from Bacillus cereus (strain B4264).